A 147-amino-acid polypeptide reads, in one-letter code: Ubiquitin-conjugating enzyme E2 D2 (147 aa).

Residues 1–147 form the UBC core domain; sequence MALKRIHKEL…AREWTQKYAM (147 aa). The active-site Glycyl thioester intermediate is Cys85.

Belongs to the ubiquitin-conjugating enzyme family. As to quaternary structure, interacts with SCF (SKP1-CUL1-F-box protein) E3 ubiquitin ligase complex. Interacts with CNOT4 (via RING domain). Interacts with E3 ubiquitin-protein ligases CBLC, PJA1 and PJA2. Interacts with PDZRN3. Interacts with PPP1R11. Interacts with E3 ubiquitin-protein ligase PHF7; the interaction inhibits cleavage of PHF7 and promotes association of the complex with the nucleosome core particle.

The enzyme catalyses S-ubiquitinyl-[E1 ubiquitin-activating enzyme]-L-cysteine + [E2 ubiquitin-conjugating enzyme]-L-cysteine = [E1 ubiquitin-activating enzyme]-L-cysteine + S-ubiquitinyl-[E2 ubiquitin-conjugating enzyme]-L-cysteine.. It catalyses the reaction S-ubiquitinyl-[E1 ubiquitin-activating enzyme]-L-cysteine + [acceptor protein]-L-lysine = [E1 ubiquitin-activating enzyme]-L-cysteine + N(6)-monoubiquitinyl-[acceptor protein]-L-lysine.. Its pathway is protein modification; protein ubiquitination. In terms of biological role, accepts ubiquitin from the E1 complex and catalyzes its covalent attachment to other proteins. In vitro catalyzes 'Lys-48'-linked polyubiquitination. Mediates the selective degradation of short-lived and abnormal proteins. Functions in the E6/E6-AP-induced ubiquitination of p53/TP53. Mediates ubiquitination of PEX5 and SQSTM1 and autoubiquitination of STUB1 and TRAF6. Involved in the signal-induced conjugation and subsequent degradation of NFKBIA, FBXW2-mediated GCM1 ubiquitination and degradation, MDM2-dependent degradation of p53/TP53 and the activation of MAVS in the mitochondria by RIGI in response to viral infection. Essential for viral activation of IRF3. The polypeptide is Ubiquitin-conjugating enzyme E2 D2 (UBE2D2) (Bos taurus (Bovine)).